We begin with the raw amino-acid sequence, 213 residues long: 3-isopropylmalate dehydratase small subunit (213 aa).

It belongs to the LeuD family. LeuD type 1 subfamily. As to quaternary structure, heterodimer of LeuC and LeuD.

It catalyses the reaction (2R,3S)-3-isopropylmalate = (2S)-2-isopropylmalate. It participates in amino-acid biosynthesis; L-leucine biosynthesis; L-leucine from 3-methyl-2-oxobutanoate: step 2/4. In terms of biological role, catalyzes the isomerization between 2-isopropylmalate and 3-isopropylmalate, via the formation of 2-isopropylmaleate. The protein is 3-isopropylmalate dehydratase small subunit of Pseudomonas savastanoi pv. phaseolicola (strain 1448A / Race 6) (Pseudomonas syringae pv. phaseolicola (strain 1448A / Race 6)).